The primary structure comprises 308 residues: Small ribosomal subunit protein uS2 (308 aa).

Ser-2 carries the post-translational modification N-acetylserine. Laminin-binding regions lie at residues 161–180 (IPCNNKGPHSVGLMWWMLAR) and 205–229 (RDPEEIEKEEQAAAEKAVGKEEFQG). [DE]-W-[ST] repeat units follow at residues 230–232 (EWT), 245–247 (DWS), 279–281 (DWS), 288–290 (DWS), and 306–308 (DWS). The tract at residues 242-308 (EVADWSEGVQ…DWGGATADWS (67 aa)) is laminin-binding. Positions 262–308 (AGIEAPGKPAPAEVYAEDWSAQPATEDWSAAPTAQAGDWGGATADWS) are disordered.

It belongs to the universal ribosomal protein uS2 family. As to quaternary structure, monomer (37LRP) and homodimer (67LR). Component of the small ribosomal subunit. Mature ribosomes consist of a small (40S) and a large (60S) subunit. The 40S subunit contains about 33 different proteins and 1 molecule of RNA (18S). The 60S subunit contains about 49 different proteins and 3 molecules of RNA (28S, 5.8S and 5S). Interacts with rps21. Interacts with several laminins including at least lamb1. Interacts with mdk. Acylated. Acylation may be a prerequisite for conversion of the monomeric 37 kDa laminin receptor precursor (37LRP) to the mature dimeric 67 kDa laminin receptor (67LR), and may provide a mechanism for membrane association. In terms of processing, cleaved by stromelysin-3 (ST3) at the cell surface. Cleavage by stromelysin-3 may be a mechanism to alter cell-extracellular matrix interactions.

The protein resides in the cell membrane. It localises to the cytoplasm. It is found in the nucleus. Its function is as follows. Required for the assembly and/or stability of the 40S ribosomal subunit. Required for the processing of the 20S rRNA-precursor to mature 18S rRNA in a late step of the maturation of 40S ribosomal subunits. Also functions as a cell surface receptor for laminin. Plays a role in cell adhesion to the basement membrane and in the consequent activation of signaling transduction pathways. May play a role in cell fate determination and tissue morphogenesis. The protein is Small ribosomal subunit protein uS2 (rpsa) of Danio rerio (Zebrafish).